We begin with the raw amino-acid sequence, 184 residues long: Ribosome-recycling factor (184 aa).

The protein belongs to the RRF family.

It is found in the cytoplasm. In terms of biological role, responsible for the release of ribosomes from messenger RNA at the termination of protein biosynthesis. May increase the efficiency of translation by recycling ribosomes from one round of translation to another. This is Ribosome-recycling factor from Natranaerobius thermophilus (strain ATCC BAA-1301 / DSM 18059 / JW/NM-WN-LF).